We begin with the raw amino-acid sequence, 117 residues long: Large ribosomal subunit protein eL18 (117 aa).

Belongs to the eukaryotic ribosomal protein eL18 family.

The protein is Large ribosomal subunit protein eL18 of Halobacterium salinarum (strain ATCC 29341 / DSM 671 / R1).